The chain runs to 201 residues: Ubiquinone biosynthesis accessory factor UbiJ (201 aa).

One can recognise an SCP2 domain in the interval 15-112 (LNTFLYRSPA…QVVQNFVALA (98 aa)).

Belongs to the UbiJ family.

The protein resides in the cytoplasm. It participates in cofactor biosynthesis; ubiquinone biosynthesis. In terms of biological role, required for ubiquinone (coenzyme Q) biosynthesis under aerobic conditions. Binds hydrophobic ubiquinone biosynthetic intermediates via its SCP2 domain and is essential for the stability of the Ubi complex. May constitute a docking platform where Ubi enzymes assemble and access their SCP2-bound polyprenyl substrates. Required for intracellular proliferation in macrophages. The sequence is that of Ubiquinone biosynthesis accessory factor UbiJ from Salmonella typhimurium (strain LT2 / SGSC1412 / ATCC 700720).